Reading from the N-terminus, the 294-residue chain is Type 4 apparatus protein DotZ (294 aa).

The T4BSS is a complex nanomachine composed of several subcomplexes. This subunit is part of the Type IV Coupling Complex (T4CC), a subcomplex composed of the DotLMNYZ core and the IcmSW-LvgA adapter subunits, linked by the C-terminal tail of DotL. Six DotLMNYZ hetero-pentameric units may assemble into a hexameric nanomachine, forming an inner membrane channel for effectors to pass through. Makes significant contact with DotN and DotY, but engages weakly with DotM and DotL. DotY and DotZ are co-dependent for the assembly into the T4CC.

The protein localises to the cytoplasm. Its function is as follows. Component of the Dot/Icm type IVB secretion system (T4BSS), which is used to inject bacterial effector proteins into eukaryotic host cells. Part of a subcomplex which recruits effector proteins and delivers them to the core transmembrane subcomplex. DotY and DotZ play a role in effector translocation, but are not essential and do not influence the stability of the subcomplex main components. The DotY/DotZ main function is to optimize secretion by modulating the delivery trajectory of the IcmSW module and the localization of the machinery to the poles. The polypeptide is Type 4 apparatus protein DotZ (Legionella pneumophila subsp. pneumophila (strain Philadelphia 1 / ATCC 33152 / DSM 7513)).